The primary structure comprises 131 residues: Histone H2A.1 (131 aa).

Ser2 bears the N-acetylserine mark. 2 positions are modified to N6-acetyllysine: Lys4 and Lys7. Gln105 carries the N5-methylglutamine modification. Residue Lys126 forms a Glycyl lysine isopeptide (Lys-Gly) (interchain with G-Cter in SUMO) linkage. A Phosphoserine modification is found at Ser128. The [ST]-Q motif motif lies at 128 to 129 (SQ).

This sequence belongs to the histone H2A family. As to quaternary structure, the nucleosome is a histone octamer containing two molecules each of H2A, H2B, H3 and H4 assembled in one H3-H4 heterotetramer and two H2A-H2B heterodimers. The octamer wraps approximately 147 bp of DNA. Post-translationally, phosphorylated to form H2AS128ph (gamma-H2A) in response to DNA double-strand breaks (DSBs) generated by exogenous genotoxic agents and by stalled replication forks. Phosphorylation is dependent on the DNA damage checkpoint kinases MEC1/ATR and TEL1/ATM, spreads on either side of a detected DSB site and may mark the surrounding chromatin for recruitment of proteins required for DNA damage signaling and repair. Gamma-H2A is removed from the DNA prior to the strand invasion-primer extension step of the repair process and subsequently dephosphorylated by PPH3, a component of the histone H2A phosphatase complex (HTP-C). Dephosphorylation is necessary for efficient recovery from the DNA damage checkpoint. In terms of processing, sumoylation on Lys-126 may lead to transcriptional repression. Acetylated by ESA1 to form H2AK4ac and H2AK7ac.

It localises to the nucleus. It is found in the chromosome. In terms of biological role, core component of nucleosome which plays a central role in DNA double strand break (DSB) repair. Nucleosomes wrap and compact DNA into chromatin, limiting DNA accessibility to the cellular machineries which require DNA as a template. Histones thereby play a central role in transcription regulation, DNA repair, DNA replication and chromosomal stability. DNA accessibility is regulated via a complex set of post-translational modifications of histones, also called histone code, and nucleosome remodeling. This Eremothecium gossypii (strain ATCC 10895 / CBS 109.51 / FGSC 9923 / NRRL Y-1056) (Yeast) protein is Histone H2A.1 (HTA1).